The following is a 429-amino-acid chain: Homocysteine synthase (429 aa).

The residue at position 210 (Lys-210) is an N6-(pyridoxal phosphate)lysine.

It belongs to the trans-sulfuration enzymes family. Homotetramer. It depends on pyridoxal 5'-phosphate as a cofactor.

Its subcellular location is the cytoplasm. The protein localises to the nucleus. The enzyme catalyses O-acetyl-L-homoserine + methanethiol = L-methionine + acetate + H(+). It catalyses the reaction O-acetyl-L-homoserine + hydrogen sulfide = L-homocysteine + acetate. It participates in amino-acid biosynthesis; L-methionine biosynthesis via de novo pathway; L-homocysteine from O-acetyl-L-homoserine. Its function is as follows. Catalyzes the conversion of O-acetyl-L-homoserine (OAH) into homocysteine in the methionine biosynthesis pathway. Can also use O-succinyl-L-homoserine and L-homoserine as substrates. Also has cysteine synthase (O-acetylserine sulfhydrylase) activity in vitro, but in S.pombe, it seems only to be involved in the alternative pathway of methionine biosynthesis under cysteine deficiency conditions. This is Homocysteine synthase from Schizosaccharomyces pombe (strain 972 / ATCC 24843) (Fission yeast).